Reading from the N-terminus, the 345-residue chain is Phosphoribosylformylglycinamidine cyclo-ligase (345 aa).

Belongs to the AIR synthase family.

Its subcellular location is the cytoplasm. It catalyses the reaction 2-formamido-N(1)-(5-O-phospho-beta-D-ribosyl)acetamidine + ATP = 5-amino-1-(5-phospho-beta-D-ribosyl)imidazole + ADP + phosphate + H(+). Its pathway is purine metabolism; IMP biosynthesis via de novo pathway; 5-amino-1-(5-phospho-D-ribosyl)imidazole from N(2)-formyl-N(1)-(5-phospho-D-ribosyl)glycinamide: step 2/2. The chain is Phosphoribosylformylglycinamidine cyclo-ligase from Aeromonas salmonicida (strain A449).